The primary structure comprises 188 residues: Ribosome-recycling factor (188 aa).

It belongs to the RRF family.

Its subcellular location is the cytoplasm. Functionally, responsible for the release of ribosomes from messenger RNA at the termination of protein biosynthesis. May increase the efficiency of translation by recycling ribosomes from one round of translation to another. The sequence is that of Ribosome-recycling factor from Cereibacter sphaeroides (strain ATCC 17029 / ATH 2.4.9) (Rhodobacter sphaeroides).